The chain runs to 224 residues: UPF0758 protein VFMJ11_0123 (224 aa).

The region spanning 102 to 224 (ALTSPEHTKR…IVSFAERGWI (123 aa)) is the MPN domain. The Zn(2+) site is built by H173, H175, and D186. Residues 173 to 186 (HNHPSGVAEPSQAD) carry the JAMM motif motif.

This sequence belongs to the UPF0758 family.

The polypeptide is UPF0758 protein VFMJ11_0123 (Aliivibrio fischeri (strain MJ11) (Vibrio fischeri)).